The sequence spans 177 residues: MYKVLLIRLTNLDNLIVNSVRTHLMNMGFEVEVNEEIFHLNAELFNWERWQYNADKLLQLVKLTFERYPYDAVIGIGEADGFSDGLNFVFGLSTKKYGLVFLSRLKEEFYGRVINSSLYIERTLKEVTHELGHTLGLGHCNNKECVMNFSVSVEDVDKKGKYFCTSCSDKLNINNKS.

Residue histidine 129 participates in Zn(2+) binding. Residue glutamate 130 is the Proton acceptor of the active site. Positions 133, 139, 140, 145, 164, and 167 each coordinate Zn(2+).

The protein belongs to the peptidase M54 family. In terms of assembly, monomer. It depends on Zn(2+) as a cofactor.

Its function is as follows. Probable zinc metalloprotease whose natural substrate is unknown. The polypeptide is Archaemetzincin (Sulfolobus acidocaldarius (strain ATCC 33909 / DSM 639 / JCM 8929 / NBRC 15157 / NCIMB 11770)).